The sequence spans 127 residues: Small ribosomal subunit protein eS8 (127 aa).

The protein belongs to the eukaryotic ribosomal protein eS8 family. Part of the 30S ribosomal subunit.

In Pyrococcus furiosus (strain ATCC 43587 / DSM 3638 / JCM 8422 / Vc1), this protein is Small ribosomal subunit protein eS8.